The primary structure comprises 291 residues: Acetyl-coenzyme A carboxylase carboxyl transferase subunit beta (291 aa).

The 258-residue stretch at 34–291 folds into the CoA carboxyltransferase N-terminal domain; the sequence is MWTKCSNCNS…LILHGVNKYE (258 aa). Zn(2+) contacts are provided by C38, C41, C57, and C60. The C4-type zinc finger occupies 38–60; the sequence is CSNCNSMIYYEDLENNKYVCTKC.

It belongs to the AccD/PCCB family. As to quaternary structure, acetyl-CoA carboxylase is a heterohexamer composed of biotin carboxyl carrier protein (AccB), biotin carboxylase (AccC) and two subunits each of ACCase subunit alpha (AccA) and ACCase subunit beta (AccD). Zn(2+) is required as a cofactor.

It localises to the cytoplasm. The catalysed reaction is N(6)-carboxybiotinyl-L-lysyl-[protein] + acetyl-CoA = N(6)-biotinyl-L-lysyl-[protein] + malonyl-CoA. It functions in the pathway lipid metabolism; malonyl-CoA biosynthesis; malonyl-CoA from acetyl-CoA: step 1/1. Its function is as follows. Component of the acetyl coenzyme A carboxylase (ACC) complex. Biotin carboxylase (BC) catalyzes the carboxylation of biotin on its carrier protein (BCCP) and then the CO(2) group is transferred by the transcarboxylase to acetyl-CoA to form malonyl-CoA. In Clostridium botulinum (strain Alaska E43 / Type E3), this protein is Acetyl-coenzyme A carboxylase carboxyl transferase subunit beta.